The sequence spans 873 residues: Bifunctional uridylyltransferase/uridylyl-removing enzyme (873 aa).

Residues 1 to 332 (MKYLSPLSLS…HQGEQDDAII (332 aa)) form a uridylyltransferase region. Residues 333–692 (IDDDFQRRGR…ISKNASRGGT (360 aa)) are uridylyl-removing. An HD domain is found at 451 to 573 (VDEHSIRLLK…VRDEERLDYL (123 aa)). ACT domains are found at residues 693-777 (EIFV…RPPR) and 800-873 (LMEF…RLSS).

The protein belongs to the GlnD family. The cofactor is Mg(2+).

It carries out the reaction [protein-PII]-L-tyrosine + UTP = [protein-PII]-uridylyl-L-tyrosine + diphosphate. The catalysed reaction is [protein-PII]-uridylyl-L-tyrosine + H2O = [protein-PII]-L-tyrosine + UMP + H(+). With respect to regulation, uridylyltransferase (UTase) activity is inhibited by glutamine, while glutamine activates uridylyl-removing (UR) activity. In terms of biological role, modifies, by uridylylation and deuridylylation, the PII regulatory proteins (GlnB and homologs), in response to the nitrogen status of the cell that GlnD senses through the glutamine level. Under low glutamine levels, catalyzes the conversion of the PII proteins and UTP to PII-UMP and PPi, while under higher glutamine levels, GlnD hydrolyzes PII-UMP to PII and UMP (deuridylylation). Thus, controls uridylylation state and activity of the PII proteins, and plays an important role in the regulation of nitrogen assimilation and metabolism. The protein is Bifunctional uridylyltransferase/uridylyl-removing enzyme of Aliivibrio fischeri (strain MJ11) (Vibrio fischeri).